Reading from the N-terminus, the 254-residue chain is Imidazole glycerol phosphate synthase subunit HisF (254 aa).

Active-site residues include Asp-11 and Asp-130.

The protein belongs to the HisA/HisF family. As to quaternary structure, heterodimer of HisH and HisF.

Its subcellular location is the cytoplasm. The catalysed reaction is 5-[(5-phospho-1-deoxy-D-ribulos-1-ylimino)methylamino]-1-(5-phospho-beta-D-ribosyl)imidazole-4-carboxamide + L-glutamine = D-erythro-1-(imidazol-4-yl)glycerol 3-phosphate + 5-amino-1-(5-phospho-beta-D-ribosyl)imidazole-4-carboxamide + L-glutamate + H(+). It participates in amino-acid biosynthesis; L-histidine biosynthesis; L-histidine from 5-phospho-alpha-D-ribose 1-diphosphate: step 5/9. IGPS catalyzes the conversion of PRFAR and glutamine to IGP, AICAR and glutamate. The HisF subunit catalyzes the cyclization activity that produces IGP and AICAR from PRFAR using the ammonia provided by the HisH subunit. In Gloeobacter violaceus (strain ATCC 29082 / PCC 7421), this protein is Imidazole glycerol phosphate synthase subunit HisF.